Reading from the N-terminus, the 503-residue chain is Putative aldehyde dehydrogenase-like protein C9E9.09c (503 aa).

247–252 serves as a coordination point for NAD(+); it reads GSTGVG. Ser248 carries the post-translational modification Phosphoserine. Glu270 functions as the Proton acceptor in the catalytic mechanism. Cys304 functions as the Nucleophile in the catalytic mechanism. Ser501 carries the phosphoserine modification.

The protein belongs to the aldehyde dehydrogenase family.

In Schizosaccharomyces pombe (strain 972 / ATCC 24843) (Fission yeast), this protein is Putative aldehyde dehydrogenase-like protein C9E9.09c.